We begin with the raw amino-acid sequence, 423 residues long: Heat shock transcription factor, X-linked (423 aa).

Basic and acidic residues predominate over residues 1-25 (MEDKRSLSMARCEERNSRGQDHGLE). Disordered regions lie at residues 1–56 (MEDK…STGS), 215–303 (KSAP…EGSQ), and 397–423 (PHSH…DQST). A DNA-binding region spans residues 98 to 282 (PFPQKLWRLV…PATPVMVPDS (185 aa)). K215 participates in a covalent cross-link: Glycyl lysine isopeptide (Lys-Gly) (interchain with G-Cter in SUMO1). Positions 243–254 (HTSPNENDQVTP) are enriched in polar residues.

The protein belongs to the HSF family. In terms of tissue distribution, testis-specific.

The protein localises to the nucleus. It localises to the cytoplasm. This is Heat shock transcription factor, X-linked (HSFX1) from Homo sapiens (Human).